An 81-amino-acid polypeptide reads, in one-letter code: RNA-binding protein Hfq (81 aa).

Residues 9–68 (DPFLNVLRRERVPVFIYLINGIKLQGEIESFDKFVILLRNTVNQMIYKHAISTIVPSRVV) form the Sm domain.

This sequence belongs to the Hfq family. As to quaternary structure, homohexamer.

Its function is as follows. RNA chaperone that binds small regulatory RNA (sRNAs) and mRNAs to facilitate mRNA translational regulation in response to envelope stress, environmental stress and changes in metabolite concentrations. Also binds with high specificity to tRNAs. This Blochmanniella pennsylvanica (strain BPEN) protein is RNA-binding protein Hfq.